Here is a 271-residue protein sequence, read N- to C-terminus: Putative phosphoenolpyruvate synthase regulatory protein (271 aa).

Residue 151–158 (GVSRSGKT) participates in ADP binding.

The protein belongs to the pyruvate, phosphate/water dikinase regulatory protein family. PSRP subfamily.

It catalyses the reaction [pyruvate, water dikinase] + ADP = [pyruvate, water dikinase]-phosphate + AMP + H(+). The enzyme catalyses [pyruvate, water dikinase]-phosphate + phosphate + H(+) = [pyruvate, water dikinase] + diphosphate. In terms of biological role, bifunctional serine/threonine kinase and phosphorylase involved in the regulation of the phosphoenolpyruvate synthase (PEPS) by catalyzing its phosphorylation/dephosphorylation. This Burkholderia vietnamiensis (strain G4 / LMG 22486) (Burkholderia cepacia (strain R1808)) protein is Putative phosphoenolpyruvate synthase regulatory protein.